The sequence spans 501 residues: Glycerol kinase 1 (501 aa).

Thr16 contacts ADP. Positions 16, 17, and 18 each coordinate ATP. Thr16 lines the sn-glycerol 3-phosphate pocket. Arg20 serves as a coordination point for ADP. Sn-glycerol 3-phosphate-binding residues include Arg84, Glu85, Tyr135, and Asp242. 5 residues coordinate glycerol: Arg84, Glu85, Tyr135, Asp242, and Gln243. The ADP site is built by Thr264 and Gly307. 4 residues coordinate ATP: Thr264, Gly307, Gln311, and Gly408. Gly408 serves as a coordination point for ADP.

This sequence belongs to the FGGY kinase family.

The enzyme catalyses glycerol + ATP = sn-glycerol 3-phosphate + ADP + H(+). It participates in polyol metabolism; glycerol degradation via glycerol kinase pathway; sn-glycerol 3-phosphate from glycerol: step 1/1. In terms of biological role, key enzyme in the regulation of glycerol uptake and metabolism. Catalyzes the phosphorylation of glycerol to yield sn-glycerol 3-phosphate. The protein is Glycerol kinase 1 of Saccharolobus solfataricus (strain ATCC 35092 / DSM 1617 / JCM 11322 / P2) (Sulfolobus solfataricus).